Here is a 948-residue protein sequence, read N- to C-terminus: Coiled-coil domain-containing protein 66 (948 aa).

Threonine 115 and threonine 121 each carry phosphothreonine. Serine 369 carries the phosphoserine modification. Residues 458–499 (DRRRQKQLEHQKAITAQVEEKRRKKQLEEEQRKKEEQEEELR) are disordered. Residues 467-558 (HQKAITAQVE…EQRIRELAQK (92 aa)) adopt a coiled-coil conformation. Residues 570–948 (GVDTIQMEYN…NQEESFGSSF (379 aa)) form a mediates localization to cilia, centrosomes and spindle microtubules and the interaction with PCM1, CEP290, CEP104 and CSPP1 region. At serine 606 the chain carries Phosphoserine. 2 disordered regions span residues 690–713 (QTKH…KRYI) and 788–808 (SFSK…RTQQ).

Homodimer; disulfide-linked. Interacts with CEP290. Interacts with PCM1. Interacts with ARMC9, TOGARAM1, CSPP1 and CEP104. Interacts with CDK5RAP2, CEP152, CEP192, TBG1 and PRC1. In terms of tissue distribution, widely expressed (at protein level). Expressed in retina, mainly in photoreceptors but also in outer plexiform and ganglion cell layers (at protein level).

It localises to the cytoplasm. Its subcellular location is the cytoskeleton. The protein localises to the microtubule organizing center. The protein resides in the centrosome. It is found in the centriolar satellite. It localises to the cell projection. Its subcellular location is the cilium. The protein localises to the cilium basal body. The protein resides in the cilium axoneme. It is found in the photoreceptor inner segment. It localises to the photoreceptor outer segment. Its subcellular location is the spindle. The protein localises to the midbody. Functionally, microtubule-binding protein required for ciliogenesis. May function in ciliogenesis by mediating the transport of proteins like BBS4 to the cilium, but also through the organization of the centriolar satellites. Required for the assembly of signaling-competent cilia with proper structure and length. Mediates this function in part by regulating transition zone assembly and basal body recruitment of the IFT-B complex. Cooperates with the ciliopathy proteins CSPP1 and CEP104 during cilium length regulation. Plays two important roles during cell division. First, is required for mitotic progression via regulation of spindle assembly, organization and orientation, levels of spindle microtubules (MTs), kinetochore-fiber integrity, and chromosome alignment. Second, functions during cytokinesis in part by regulating assembly and organization of central spindle and midbody MTs. Plays a role in retina morphogenesis and/or homeostasis. The protein is Coiled-coil domain-containing protein 66 of Homo sapiens (Human).